The primary structure comprises 291 residues: ATP synthase gamma chain 2 (291 aa).

Residues 187 to 208 (LLPHPDKDESQDSKPNDATSRW) are disordered. Over residues 190-201 (HPDKDESQDSKP) the composition is skewed to basic and acidic residues.

This sequence belongs to the ATPase gamma chain family. As to quaternary structure, F-type ATPases have 2 components, CF(1) - the catalytic core - and CF(0) - the membrane proton channel. CF(1) has five subunits: alpha(3), beta(3), gamma(1), delta(1), epsilon(1). CF(0) has three main subunits: a, b and c.

It is found in the cell inner membrane. Produces ATP from ADP in the presence of a proton gradient across the membrane. The gamma chain is believed to be important in regulating ATPase activity and the flow of protons through the CF(0) complex. This is ATP synthase gamma chain 2 from Photobacterium profundum (strain SS9).